The following is a 482-amino-acid chain: MDYHMDYIPNEVISHQGERFVDKYVDRKILKNKKSLLVIISLSVLSVVGFILFYFTPNFRKSDLFKNSSVENNNDDYIINSLLKSPNGKKFIVSKIDEALSFYDNKMKDINKNNNNNTSSDFKGLSLFKENKPSNNFIHNENYFINVFDHKFLMNNVEHINQFYTFIKTNNKQYNSPNEMKERFQVFLQNAHKVKMHNNNKKSLYKKELNRFADLTYHEFKSKYLTLRSSKPLKNSKYLLDQINYDAVIKKYKGNENFDHAAYDWRLHSGVTPVKDQKNCGSCWAFSSIGSVESQYAIRKNKLITLSEQELVDCSFKNYGCNGGLINNAFEDMIELGGICTDDDYPYVSDAPNLCNIDRCTEKYGIKNYLSVPDNKLKEALRFLGPISISIAVSDDFPFYKEGIFDGECGDELNHAVMLVGFGMKEIVNPLTKKGEKHYYYIIKNSWGQQWGERGFINIETDESGLMRKCGLGTDAFIPLIE.

Topologically, residues Met1–Ser35 are cytoplasmic. The propeptide at Met1 to Asp241 is activation peptide. The Bipartite vacuolar targeting signal 1 motif lies at Gln16–Val25. A helical; Signal-anchor for type II membrane protein membrane pass occupies residues Leu36 to Thr56. Topologically, residues Pro57–Glu482 are lumenal. A glycan (N-linked (GlcNAc...) asparagine) is linked at Asn67. The Bipartite vacuolar targeting signal 2 signature appears at Lys84–Asn105. N-linked (GlcNAc...) asparagine glycosylation occurs at Asn117. Residues Gln242–Phe258 carry the Nose motif; required for the correct folding of the mature form motif. Intrachain disulfides connect Cys280–Cys321, Cys314–Cys355, Cys340–Cys360, and Cys409–Cys470. Cys283 is a catalytic residue. His415 is a catalytic residue. The Arm motif; binds to host hemoglobin and required for the inhibitory interaction between the propeptide and the catalytic domain signature appears at Glu426 to Gly435.

It belongs to the peptidase C1 family. Component of the hemozoin formation complex (HFC) composed of falcipains FP2A and/or FP2B, plasmepsins PMII, PMIII/HAP and PMIV, heme detoxifying protein HDP and falcilysin FLN. The HFC complex is involved in hemoglobin degradation and detoxification of heme in the food vacuole during the asexual blood stage.

It is found in the vacuole. The protein resides in the membrane. In terms of biological role, cysteine protease which cleaves native host hemoglobin in the food vacuole during the asexual blood stage. Preferentially cleaves substrates which have a leucine at the P2 position. This Plasmodium falciparum (isolate 3D7) protein is Falcipain-2b.